The primary structure comprises 320 residues: Malate dehydrogenase (320 aa).

Residues 10-15 and D34 contribute to the NAD(+) site; that span reads GSGMIG. 2 residues coordinate substrate: R83 and R89. NAD(+) contacts are provided by residues N96 and 119–121; that span reads ITN. Substrate contacts are provided by N121 and R152. The active-site Proton acceptor is the H176.

The protein belongs to the LDH/MDH superfamily. MDH type 3 family.

The enzyme catalyses (S)-malate + NAD(+) = oxaloacetate + NADH + H(+). In terms of biological role, catalyzes the reversible oxidation of malate to oxaloacetate. The polypeptide is Malate dehydrogenase (Bartonella henselae (strain ATCC 49882 / DSM 28221 / CCUG 30454 / Houston 1) (Rochalimaea henselae)).